Reading from the N-terminus, the 782-residue chain is Small RNA degrading nuclease 3 (782 aa).

One can recognise an Exonuclease domain in the interval 145-296; the sequence is MLSIDCEMVT…HDAAAAMKLV (152 aa). An RRM 1 domain is found at 331 to 410; sequence AQLFLHKIPH…KKAVLKLSSG (80 aa). Residues 426 to 464 are disordered; it reads PCEISTSERARAEENNVSSKRQKTEDETEETKEATVNQR. The region spanning 469–549 is the RRM 2 domain; the sequence is TKLFLHKIPH…KMVVFKLSSG (81 aa). Residues 563-605 form a disordered region; the sequence is DSPGEISTTKRARTEESNMSSKRQKTEDESEETKEANAKQREA. A coiled-coil region spans residues 577–605; it reads EESNMSSKRQKTEDESEETKEANAKQREA. Residues 595-605 show a composition bias toward basic and acidic residues; it reads TKEANAKQREA. An RRM 3 domain is found at 608-688; it reads TKLLLHKIPL…KMVAFKLSSG (81 aa). Residues 709-779 are a coiled coil; sequence ANANHCEDDH…KMKLEKKQSK (71 aa).

This sequence belongs to the REXO1/REXO3 family. As to quaternary structure, associated with the Mediator complex.

The protein resides in the nucleus. Functionally, 3'-5' exonuclease degrading single-stranded small RNAs. This is Small RNA degrading nuclease 3 (SDN3) from Arabidopsis thaliana (Mouse-ear cress).